Consider the following 675-residue polypeptide: Protein kintoun (675 aa).

4 disordered regions span residues 98-131, 265-293, 310-340, and 509-659; these read ASKK…KQGA, AGEG…TAPP, EGGA…AVAK, and EAAH…AAPT. Positions 102-113 are enriched in basic and acidic residues; that stretch reads QQQEQEKQEKEQ. Positions 279–293 are enriched in low complexity; it reads VPGVPDLPGAKTAPP. The span at 529–543 shows a compositional bias: low complexity; it reads AAAASSGAAPAPAAA. A compositionally biased stretch (acidic residues) spans 544-553; the sequence is SEEEEEEDKE. Low complexity predominate over residues 564–577; the sequence is DPAAAAAAAGASSG. Residues 579–596 are compositionally biased toward basic and acidic residues; it reads ELTENERKWRELHARQQQ. 2 stretches are compositionally biased toward low complexity: residues 604–617 and 628–659; these read AAEA…AAAE and VAQG…AAPT.

This sequence belongs to the PIH1 family. Kintoun subfamily.

It is found in the cytoplasm. Required for cytoplasmic pre-assembly of axonemal dyneins, thereby playing a central role in motility in cilia and flagella. Involved in pre-assembly of dynein arm complexes in the cytoplasm before intraflagellar transport loads them for the ciliary compartment. The polypeptide is Protein kintoun (pf13) (Chlamydomonas reinhardtii (Chlamydomonas smithii)).